The primary structure comprises 224 residues: Serum amyloid P-component (224 aa).

The signal sequence occupies residues 1 to 19 (MNKLMSWVSVLIILPEAFA). The Pentraxin (PTX) domain maps to 24-224 (RGKVFVFPRE…YVIVKPMVWG (201 aa)). An N-linked (GlcNAc...) asparagine glycan is attached at Asn-51. A disulfide bridge links Cys-55 with Cys-114. The Ca(2+) site is built by Asp-77, Asn-78, Glu-155, Gln-156, and Asp-157. Asn-166 is a glycosylation site (N-linked (GlcNAc...) asparagine). Ca(2+) is bound at residue Gln-167.

This sequence belongs to the pentraxin family. Homopentamer. Pentraxin (or pentaxin) have a discoid arrangement of 5 non-covalently bound subunits. It depends on Ca(2+) as a cofactor.

The protein resides in the secreted. The sequence is that of Serum amyloid P-component (APCS) from Bos taurus (Bovine).